Reading from the N-terminus, the 76-residue chain is Exodeoxyribonuclease 7 small subunit (76 aa).

The protein belongs to the XseB family. As to quaternary structure, heterooligomer composed of large and small subunits.

The protein resides in the cytoplasm. It catalyses the reaction Exonucleolytic cleavage in either 5'- to 3'- or 3'- to 5'-direction to yield nucleoside 5'-phosphates.. Bidirectionally degrades single-stranded DNA into large acid-insoluble oligonucleotides, which are then degraded further into small acid-soluble oligonucleotides. The protein is Exodeoxyribonuclease 7 small subunit of Staphylococcus aureus (strain MRSA252).